Reading from the N-terminus, the 166-residue chain is Bud site selection protein 20 (166 aa).

The Nuclear localization signal motif lies at 7 to 16 (KRYKTKRRTR). The segment at 17 to 31 (DLDLIYNDLSTKESV) is nuclear export signal-like (NES-like). The segment at 49 to 73 (HYCIHCAKYMETAIALKTHLKGKVH) adopts a C2H2-type zinc-finger fold.

Belongs to the ZNF593/BUD20 C2H2-type zinc-finger protein family. Associates with pre-60S ribosomal particles; released from the pre-60S particle very early in the cytoplasm.

It localises to the nucleus. The protein resides in the cytoplasm. Involved in pre-60S ribosomal particles maturation by promoting the nuclear export of the 60S ribosome. Involved in positioning the proximal bud pole signal. The polypeptide is Bud site selection protein 20 (Saccharomyces cerevisiae (strain ATCC 204508 / S288c) (Baker's yeast)).